Consider the following 440-residue polypeptide: uncharacterized protein (440 aa).

2 disordered regions span residues 49–81 and 162–295; these read CPPA…EPSL and LPKP…CASE. Residues 55 to 80 are compositionally biased toward polar residues; the sequence is HGHSSLRTNLNSSPPRCPQNPGTEPS. Over residues 249–266 the composition is skewed to basic and acidic residues; that stretch reads YREELSNTKSRFSEDKGS. The segment covering 274–284 has biased composition (low complexity); the sequence is SSNSSEPGLPG.

It belongs to the tymoviridae protein p69 family.

This is an uncharacterized protein from Erysimum latent virus (ELV).